The chain runs to 356 residues: Glutamine synthetase N-1 (356 aa).

The GS beta-grasp domain maps to 19–99 (VIAEYIWVGG…VMCDAYTPAG (81 aa)). The GS catalytic domain maps to 106-356 (KRHNAAKIFS…IAETTLLWKP (251 aa)).

The protein belongs to the glutamine synthetase family. In terms of assembly, homooctamer. In terms of tissue distribution, this is a nodule isozyme.

It localises to the cytoplasm. It catalyses the reaction L-glutamate + NH4(+) + ATP = L-glutamine + ADP + phosphate + H(+). In Phaseolus vulgaris (Kidney bean), this protein is Glutamine synthetase N-1 (Gln-gamma).